A 450-amino-acid polypeptide reads, in one-letter code: Putative serine/threonine-protein kinase R517/R518 (450 aa).

Residues lysine 9–phenylalanine 290 form the Protein kinase domain. ATP contacts are provided by residues leucine 15–valine 23 and lysine 38. Aspartate 140 acts as the Proton acceptor in catalysis.

The protein belongs to the protein kinase superfamily. Ser/Thr protein kinase family.

The catalysed reaction is L-seryl-[protein] + ATP = O-phospho-L-seryl-[protein] + ADP + H(+). It carries out the reaction L-threonyl-[protein] + ATP = O-phospho-L-threonyl-[protein] + ADP + H(+). This chain is Putative serine/threonine-protein kinase R517/R518, found in Acanthamoeba polyphaga mimivirus (APMV).